The following is a 393-amino-acid chain: Putative N(4)-(beta-N-acetylglucosaminyl)-L-asparaginase GM21137 (393 aa).

The first 23 residues, 1–23 (MRTHLRASLWVLCLASTAFSILA), serve as a signal peptide directing secretion. Cystine bridges form between C97-C102 and C196-C212. The Nucleophile role is filled by T243. Substrate is bound by residues 271 to 274 (RVGD) and 294 to 297 (TGDG). C354 and C381 are oxidised to a cystine.

This sequence belongs to the Ntn-hydrolase family. As to quaternary structure, heterotetramer of two alpha and two beta chains arranged as a dimer of alpha/beta heterodimers. In terms of processing, cleaved into an alpha and beta chain by autocatalysis; this activates the enzyme. The N-terminal residue of the beta subunit is responsible for the nucleophile hydrolase activity.

It catalyses the reaction N(4)-(beta-N-acetyl-D-glucosaminyl)-L-asparagine + H2O = N-acetyl-beta-D-glucosaminylamine + L-aspartate + H(+). Its function is as follows. Cleaves the GlcNAc-Asn bond which joins oligosaccharides to the peptide of asparagine-linked glycoproteins. This Drosophila sechellia (Fruit fly) protein is Putative N(4)-(beta-N-acetylglucosaminyl)-L-asparaginase GM21137.